The sequence spans 184 residues: Peptide deformylase (184 aa).

The Fe cation site is built by Cys96 and His138. Glu139 is a catalytic residue. Residue His142 participates in Fe cation binding.

This sequence belongs to the polypeptide deformylase family. Fe(2+) serves as cofactor.

The enzyme catalyses N-terminal N-formyl-L-methionyl-[peptide] + H2O = N-terminal L-methionyl-[peptide] + formate. Its function is as follows. Removes the formyl group from the N-terminal Met of newly synthesized proteins. Requires at least a dipeptide for an efficient rate of reaction. N-terminal L-methionine is a prerequisite for activity but the enzyme has broad specificity at other positions. This is Peptide deformylase from Cytophaga hutchinsonii (strain ATCC 33406 / DSM 1761 / CIP 103989 / NBRC 15051 / NCIMB 9469 / D465).